The sequence spans 439 residues: Proline--tRNA ligase (439 aa).

This sequence belongs to the class-II aminoacyl-tRNA synthetase family. ProS type 2 subfamily. As to quaternary structure, homodimer.

Its subcellular location is the cytoplasm. It carries out the reaction tRNA(Pro) + L-proline + ATP = L-prolyl-tRNA(Pro) + AMP + diphosphate. Catalyzes the attachment of proline to tRNA(Pro) in a two-step reaction: proline is first activated by ATP to form Pro-AMP and then transferred to the acceptor end of tRNA(Pro). This is Proline--tRNA ligase from Nitrobacter winogradskyi (strain ATCC 25391 / DSM 10237 / CIP 104748 / NCIMB 11846 / Nb-255).